A 258-amino-acid polypeptide reads, in one-letter code: Oxidoreductase fscI (258 aa).

5 residues coordinate NADP(+): leucine 34, arginine 59, aspartate 82, asparagine 109, and lysine 141. The active-site Proton donor is serine 163. Arginine 193 contacts NADP(+).

This sequence belongs to the short-chain dehydrogenases/reductases (SDR) family.

The protein operates within secondary metabolite biosynthesis. Its function is as follows. Oxidoreductase; part of the fragmented gene cluster that mediates the biosynthesis of fusarochromene, a tryptophan-derived metabolite closely related to a group of mycotoxins including fusarochromanone. Within the pathway, fscI catalyzes the formation of the chromene ring from the prenyl moity added by the prenyltransferase fscG. The first step of the pathway is the epimerization of L-tryptophan to D-tryptophan in the presence of the NRPS-like tryptophan epimerase fscC. D-tryptophan is subsequently hydroxylated by the tryptophan 6-hydroxylase fscE to yield 6-hydroxytryptophan. The pyrrole ring undergoes cleavaged by the tryptophan 2,3-dioxygenase fscD and is finally converted to 4-hydroxykyrunenine by the hydrolase fscH. The NRPS-like oxidoreductase fscA reduces the carboxyl group to primary alcohol and the DMATS-type prenyltransferase fscG performs prenylation, followed by the formation of a chromene ring catalyzed by the oxidoreductase fscI, which leads to desacetylfusarochromene. Epoxidation by fscF and rearrangement reactions of chromene double bonds convert compound desacetylfusarochromene to fusarochromanones. Although specific acetyltransferases were not found near the fsc gene cluster, several predicted enzymes containing the N-acetyltransferase superfamily domain are present in the genome of F.equiseti. These predicted enzymes may have the potential to convert desacetylfusarochromene to fusarochromene. In Fusarium equiseti (Fusarium scirpi), this protein is Oxidoreductase fscI.